Here is a 153-residue protein sequence, read N- to C-terminus: NAD(P)H-quinone oxidoreductase subunit N (153 aa).

This sequence belongs to the complex I NdhN subunit family. NDH-1 can be composed of about 15 different subunits; different subcomplexes with different compositions have been identified which probably have different functions.

It is found in the cellular thylakoid membrane. The enzyme catalyses a plastoquinone + NADH + (n+1) H(+)(in) = a plastoquinol + NAD(+) + n H(+)(out). The catalysed reaction is a plastoquinone + NADPH + (n+1) H(+)(in) = a plastoquinol + NADP(+) + n H(+)(out). Its function is as follows. NDH-1 shuttles electrons from an unknown electron donor, via FMN and iron-sulfur (Fe-S) centers, to quinones in the respiratory and/or the photosynthetic chain. The immediate electron acceptor for the enzyme in this species is believed to be plastoquinone. Couples the redox reaction to proton translocation, and thus conserves the redox energy in a proton gradient. Cyanobacterial NDH-1 also plays a role in inorganic carbon-concentration. This is NAD(P)H-quinone oxidoreductase subunit N from Synechococcus sp. (strain CC9311).